The chain runs to 478 residues: H(+)/Cl(-) exchange transporter ClcA (478 aa).

The Cytoplasmic segment spans residues 1–32; the sequence is MTHSTQQLSPEGVAEGKRGRLIRELVNRDKTP. Residues 33–69 form a helical membrane-spanning segment; sequence LIILIMAAVVGVVTGLLGVAFDRGVDWVQQQRLLALA. Residues 70-76 are Periplasmic-facing; that stretch reads NVADSAL. The chain crosses the membrane as a helical span at residues 77-100; that stretch reads LVWPLAFIMSALLAMMGYFLVSRF. Residues 106 to 110 carry the Selectivity filter part_1 motif; that stretch reads GSGIP. Serine 107 provides a ligand contact to chloride. The helical intramembrane region spans 109 to 116; it reads IPEIEGAM. At 117–123 the chain is on the cytoplasmic side; the sequence is EEMRPVR. 2 consecutive transmembrane segments (helical) span residues 124–141 and 148–166; these read WWRVIPVKFIGGLGTLGA and EGPMVQMGGNSGRMIVDIF. The Selectivity filter part_2 motif lies at 146 to 150; sequence GREGP. Residues 167–176 lie on the Cytoplasmic side of the membrane; it reads RLRSPEARHS. 2 consecutive intramembrane regions (helical) follow at residues 177-189 and 193-201; these read LLATGAAAGLSAA and PLAGILFVI. Topologically, residues 202 to 214 are cytoplasmic; sequence EEMRSQFRYSLVS. The helical transmembrane segment at 215–232 threads the bilayer; sequence IKAVFIGVITSTIVYRYF. At 233–252 the chain is on the periplasmic side; the sequence is NGERAIIEVGKLSDAPLNTL. Residues 253–281 form a helical membrane-spanning segment; that stretch reads WLYLLLGIIFGAVGVIFNALIFRTQDMFV. At 282–287 the chain is on the cytoplasmic side; it reads RFHGGD. Residues 288–309 traverse the membrane as a helical segment; sequence WRKLVLIGGLLGGMCGLLALLH. The Periplasmic portion of the chain corresponds to 310 to 329; that stretch reads GNAVGGGFALIPIAAAGNFS. 2 consecutive transmembrane segments (helical) span residues 330–349 and 355–376; these read IGMLLFIFIARVITTLLCFG and GIFAPMLALGTILGTAFGLSCA. The Selectivity filter part_3 signature appears at 355 to 359; that stretch reads GIFAP. Positions 356 and 357 each coordinate chloride. The Periplasmic segment spans residues 377–386; it reads HFFPQYGIEA. The helical intramembrane region spans 387-401; it reads GTFAIAGMGALFAAS. An intramembrane region (note=Loop between two helices) is located at residues 402-404; it reads VRA. Residues 405–416 constitute an intramembrane region (helical); sequence PLTGIVLVLEMT. Residues 417–421 constitute an intramembrane region (note=Loop between two helices); sequence DNYQL. A helical membrane pass occupies residues 422–438; sequence ILPMIVTCLGATLIAQF. Residues 439–478 are Cytoplasmic-facing; that stretch reads MGGKPLYSAILARTLAKQEQARATVIAQEPAVENTPQTGR. Tyrosine 445 lines the chloride pocket.

The protein belongs to the chloride channel (TC 2.A.49) family. ClcA subfamily. In terms of assembly, homodimer.

The protein localises to the cell inner membrane. The catalysed reaction is 2 chloride(in) + H(+)(out) = 2 chloride(out) + H(+)(in). In terms of biological role, proton-coupled chloride transporter. Functions as antiport system and exchanges two chloride ions for 1 proton. Probably acts as an electrical shunt for an outwardly-directed proton pump that is linked to amino acid decarboxylation, as part of the extreme acid resistance (XAR) response. This Yersinia pseudotuberculosis serotype IB (strain PB1/+) protein is H(+)/Cl(-) exchange transporter ClcA.